Reading from the N-terminus, the 692-residue chain is Protein arginine N-methyltransferase 7 (692 aa).

SAM-dependent MTase PRMT-type domains lie at 14–345 (SVEW…YCVW) and 358–684 (RVRQ…IIME). The residue at position 32 (Arg-32) is an Omega-N-methylarginine. Active-site residues include Glu-144 and Glu-153.

It belongs to the class I-like SAM-binding methyltransferase superfamily. Protein arginine N-methyltransferase family. PRMT7 subfamily. As to quaternary structure, homodimer and heterodimer. Interacts with CTCFL. Interacts with PRMT5 and SNRPD3.

The protein resides in the cytoplasm. It is found in the cytosol. The protein localises to the nucleus. It carries out the reaction L-arginyl-[protein] + S-adenosyl-L-methionine = N(omega)-methyl-L-arginyl-[protein] + S-adenosyl-L-homocysteine + H(+). Arginine methyltransferase that can both catalyze the formation of omega-N monomethylarginine (MMA) and symmetrical dimethylarginine (sDMA), with a preference for the formation of MMA. Specifically mediates the symmetrical dimethylation of arginine residues in the small nuclear ribonucleoproteins Sm D1 (SNRPD1) and Sm D3 (SNRPD3); such methylation being required for the assembly and biogenesis of snRNP core particles. Specifically mediates the symmetric dimethylation of histone H4 'Arg-3' to form H4R3me2s. Plays a role in gene imprinting by being recruited by CTCFL at the H19 imprinted control region (ICR) and methylating histone H4 to form H4R3me2s, possibly leading to recruit DNA methyltransferases at these sites. May also play a role in embryonic stem cell (ESC) pluripotency. Also able to mediate the arginine methylation of histone H2A and myelin basic protein (MBP) in vitro; the relevance of such results is however unclear in vivo. The sequence is that of Protein arginine N-methyltransferase 7 (PRMT7) from Homo sapiens (Human).